Here is a 458-residue protein sequence, read N- to C-terminus: Elongation factor 1-alpha (458 aa).

Position 2 is a n,N,N-trimethylglycine (Gly-2). An N6,N6-dimethyllysine; alternate modification is found at Lys-3. The residue at position 3 (Lys-3) is an N6-methyllysine; alternate. Residues 5 to 240 form the tr-type G domain; that stretch reads KTHVNVVVIG…DAIEPPVRPS (236 aa). The interval 14 to 21 is G1; that stretch reads GHVDSGKS. A GTP-binding site is contributed by 14–21; the sequence is GHVDSGKS. Lys-30 is subject to N6-methyllysine. Positions 70–74 are G2; sequence GITID. N6,N6,N6-trimethyllysine is present on Lys-79. The tract at residues 91–94 is G3; sequence DAPG. Residues 91-95 and 153-156 each bind GTP; these read DAPGH and NKMD. The segment at 153 to 156 is G4; it reads NKMD. A G5 region spans residues 192-194; sequence SGW. Residue Lys-316 is modified to N6,N6-dimethyllysine; alternate. Lys-316 carries the post-translational modification N6-methyllysine; alternate. Lys-390 is subject to N6-methyllysine.

This sequence belongs to the TRAFAC class translation factor GTPase superfamily. Classic translation factor GTPase family. EF-Tu/EF-1A subfamily.

Its subcellular location is the cytoplasm. This protein promotes the GTP-dependent binding of aminoacyl-tRNA to the A-site of ribosomes during protein biosynthesis. This chain is Elongation factor 1-alpha (TEF-2), found in Mucor circinelloides f. lusitanicus (Mucor racemosus var. lusitanicus).